A 257-amino-acid polypeptide reads, in one-letter code: Deoxyribose-phosphate aldolase (257 aa).

Asp-102 acts as the Proton donor/acceptor in catalysis. The active-site Schiff-base intermediate with acetaldehyde is the Lys-165. Lys-199 functions as the Proton donor/acceptor in the catalytic mechanism.

This sequence belongs to the DeoC/FbaB aldolase family. DeoC type 2 subfamily.

It localises to the cytoplasm. The catalysed reaction is 2-deoxy-D-ribose 5-phosphate = D-glyceraldehyde 3-phosphate + acetaldehyde. Its pathway is carbohydrate degradation; 2-deoxy-D-ribose 1-phosphate degradation; D-glyceraldehyde 3-phosphate and acetaldehyde from 2-deoxy-alpha-D-ribose 1-phosphate: step 2/2. In terms of biological role, catalyzes a reversible aldol reaction between acetaldehyde and D-glyceraldehyde 3-phosphate to generate 2-deoxy-D-ribose 5-phosphate. The protein is Deoxyribose-phosphate aldolase of Photobacterium profundum (strain SS9).